Consider the following 929-residue polypeptide: Dual specificity protein phosphatase PHS1 (929 aa).

Disordered stretches follow at residues 1–27 and 545–618; these read MAEP…LVHD and PESP…SLSS. 2 stretches are compositionally biased toward basic and acidic residues: residues 552 to 580 and 591 to 606; these read HGHE…ESDM and ENKE…ESWH. A Tyrosine-protein phosphatase domain is found at 703–848; it reads KPSMIQENLF…LINLDKKCHG (146 aa). Cysteine 792 functions as the Phosphocysteine intermediate in the catalytic mechanism. 792-798 provides a ligand contact to substrate; sequence CFEGRSR. Positions 903 to 911 match the Nuclear export signal motif; it reads QKALEALKL.

As to quaternary structure, interacts with MPK18. In terms of tissue distribution, expressed in roots, leaves and flowers.

Its subcellular location is the cytoplasm. The enzyme catalyses O-phospho-L-seryl-[protein] + H2O = L-seryl-[protein] + phosphate. It carries out the reaction O-phospho-L-threonyl-[protein] + H2O = L-threonyl-[protein] + phosphate. The catalysed reaction is O-phospho-L-tyrosyl-[protein] + H2O = L-tyrosyl-[protein] + phosphate. Probable dual specificity phosphatase that binds and dephosphorylates MPK18, modulating the organization and dynamics of cortical microtubules. Acts as a negative regulator of abscisic acid (ABA) signaling during seed germination and light-induced stomata aperture. The protein is Dual specificity protein phosphatase PHS1 (PHS1) of Arabidopsis thaliana (Mouse-ear cress).